A 394-amino-acid polypeptide reads, in one-letter code: Aromatic-amino-acid aminotransferase (394 aa).

Substrate contacts are provided by Gly34, Tyr65, Trp127, and Asn180. Lys243 carries the N6-(pyridoxal phosphate)lysine modification. Arg371 provides a ligand contact to substrate.

It belongs to the class-I pyridoxal-phosphate-dependent aminotransferase family. As to quaternary structure, homodimer. The cofactor is pyridoxal 5'-phosphate.

The protein resides in the cytoplasm. The enzyme catalyses an aromatic L-alpha-amino acid + 2-oxoglutarate = an aromatic oxo-acid + L-glutamate. Shows activities toward both dicarboxylic and aromatic substrates. This is Aromatic-amino-acid aminotransferase (tyrB) from Paracoccus denitrificans.